Consider the following 105-residue polypeptide: Pyrimidine/purine nucleoside phosphorylase (105 aa).

This sequence belongs to the nucleoside phosphorylase PpnP family.

The enzyme catalyses a purine D-ribonucleoside + phosphate = a purine nucleobase + alpha-D-ribose 1-phosphate. It catalyses the reaction adenosine + phosphate = alpha-D-ribose 1-phosphate + adenine. It carries out the reaction cytidine + phosphate = cytosine + alpha-D-ribose 1-phosphate. The catalysed reaction is guanosine + phosphate = alpha-D-ribose 1-phosphate + guanine. The enzyme catalyses inosine + phosphate = alpha-D-ribose 1-phosphate + hypoxanthine. It catalyses the reaction thymidine + phosphate = 2-deoxy-alpha-D-ribose 1-phosphate + thymine. It carries out the reaction uridine + phosphate = alpha-D-ribose 1-phosphate + uracil. The catalysed reaction is xanthosine + phosphate = alpha-D-ribose 1-phosphate + xanthine. Catalyzes the phosphorolysis of diverse nucleosides, yielding D-ribose 1-phosphate and the respective free bases. Can use uridine, adenosine, guanosine, cytidine, thymidine, inosine and xanthosine as substrates. Also catalyzes the reverse reactions. This Paracidovorax citrulli (strain AAC00-1) (Acidovorax citrulli) protein is Pyrimidine/purine nucleoside phosphorylase.